We begin with the raw amino-acid sequence, 190 residues long: dCTP deaminase (190 aa).

Position 113-118 (113-118 (KSTYAR)) interacts with dCTP. Glutamate 139 serves as the catalytic Proton donor/acceptor. 4 residues coordinate dCTP: glutamine 158, tyrosine 172, lysine 181, and glutamine 182.

It belongs to the dCTP deaminase family. As to quaternary structure, homotrimer.

It carries out the reaction dCTP + H2O + H(+) = dUTP + NH4(+). It participates in pyrimidine metabolism; dUMP biosynthesis; dUMP from dCTP (dUTP route): step 1/2. Catalyzes the deamination of dCTP to dUTP. The polypeptide is dCTP deaminase (Chlamydia abortus (strain DSM 27085 / S26/3) (Chlamydophila abortus)).